Consider the following 196-residue polypeptide: Glycerol-3-phosphate acyltransferase (196 aa).

A run of 5 helical transmembrane segments spans residues 1–21 (MIIF…SISG), 55–75 (IAIF…WLGT), 81–101 (PIYL…PIYF), 118–138 (AISI…VYLF), and 140–160 (YASL…WYIQ).

The protein belongs to the PlsY family. As to quaternary structure, probably interacts with PlsX.

It localises to the cell inner membrane. It catalyses the reaction an acyl phosphate + sn-glycerol 3-phosphate = a 1-acyl-sn-glycero-3-phosphate + phosphate. The protein operates within lipid metabolism; phospholipid metabolism. Catalyzes the transfer of an acyl group from acyl-phosphate (acyl-PO(4)) to glycerol-3-phosphate (G3P) to form lysophosphatidic acid (LPA). This enzyme utilizes acyl-phosphate as fatty acyl donor, but not acyl-CoA or acyl-ACP. This chain is Glycerol-3-phosphate acyltransferase, found in Blochmanniella floridana.